The primary structure comprises 1058 residues: Ubiquitin-like modifier-activating enzyme 1 (1058 aa).

Positions 1–46 are disordered; the sequence is MSSSPLSKKRRVSGPDPKPGSNCSPAQSALSEVSSVPTNGMAKNGS. S2 is subject to N-acetylserine. Residues S4, S13, S21, S24, and S46 each carry the phosphoserine modification. Residues 21 to 38 are compositionally biased toward polar residues; that stretch reads SNCSPAQSALSEVSSVPT. A Phosphotyrosine modification is found at Y55. 2 consecutive repeat copies span residues 63–199 and 459–611. A 2 approximate repeats region spans residues 63 to 611; that stretch reads GHEAMKMLQT…GTKGNVQVVI (549 aa). ATP is bound by residues A478, D504, R515, K528, and 576–577; that span reads DN. An N6-succinyllysine modification is found at K528. The active-site Glycyl thioester intermediate is the C632. At K671 the chain carries N6-acetyllysine. Residue T800 is modified to Phosphothreonine. Residues S810, S816, S820, and S835 each carry the phosphoserine modification. K980 is subject to N6-acetyllysine.

The protein belongs to the ubiquitin-activating E1 family. As to quaternary structure, monomer. Interacts with GAN (via BTB domain). Post-translationally, ISGylated. As to expression, ubiquitously expressed. In testis, expressed in A spermatogonia and spermatids but at very low levels in pachytene spermatocytes.

The protein localises to the cytoplasm. The protein resides in the mitochondrion. Its subcellular location is the nucleus. The catalysed reaction is ATP + ubiquitin + [E1 ubiquitin-activating enzyme]-L-cysteine = AMP + diphosphate + S-ubiquitinyl-[E1 ubiquitin-activating enzyme]-L-cysteine.. Its pathway is protein modification; protein ubiquitination. Catalyzes the first step in ubiquitin conjugation to mark cellular proteins for degradation through the ubiquitin-proteasome system. Activates ubiquitin by first adenylating its C-terminal glycine residue with ATP, and thereafter linking this residue to the side chain of a cysteine residue in E1, yielding a ubiquitin-E1 thioester and free AMP. Essential for the formation of radiation-induced foci, timely DNA repair and for response to replication stress. Promotes the recruitment of TP53BP1 and BRCA1 at DNA damage sites. The protein is Ubiquitin-like modifier-activating enzyme 1 (Uba1) of Mus musculus (Mouse).